We begin with the raw amino-acid sequence, 157 residues long: Protein-export protein SecB (157 aa).

Belongs to the SecB family. In terms of assembly, homotetramer, a dimer of dimers. One homotetramer interacts with 1 SecA dimer.

The protein localises to the cytoplasm. In terms of biological role, one of the proteins required for the normal export of preproteins out of the cell cytoplasm. It is a molecular chaperone that binds to a subset of precursor proteins, maintaining them in a translocation-competent state. It also specifically binds to its receptor SecA. The polypeptide is Protein-export protein SecB (Magnetococcus marinus (strain ATCC BAA-1437 / JCM 17883 / MC-1)).